A 128-amino-acid chain; its full sequence is Iron-sulfur cluster insertion protein ErpA (128 aa).

Iron-sulfur cluster contacts are provided by Cys-56, Cys-120, and Cys-122.

This sequence belongs to the HesB/IscA family. Homodimer. Requires iron-sulfur cluster as cofactor.

Required for insertion of 4Fe-4S clusters for at least IspG. In Xanthomonas axonopodis pv. citri (strain 306), this protein is Iron-sulfur cluster insertion protein ErpA.